A 91-amino-acid polypeptide reads, in one-letter code: Small ribosomal subunit protein bS16 (91 aa).

This sequence belongs to the bacterial ribosomal protein bS16 family.

This chain is Small ribosomal subunit protein bS16, found in Limosilactobacillus fermentum (strain NBRC 3956 / LMG 18251) (Lactobacillus fermentum).